Reading from the N-terminus, the 346-residue chain is Arsenite methyltransferase (346 aa).

It belongs to the methyltransferase superfamily. Arsenite methyltransferase family.

The catalysed reaction is arsenic triglutathione + [thioredoxin]-dithiol + S-adenosyl-L-methionine + 2 H2O = methylarsonous acid + [thioredoxin]-disulfide + 3 glutathione + S-adenosyl-L-homocysteine + H(+). The enzyme catalyses arsenic triglutathione + 2 [thioredoxin]-dithiol + 2 S-adenosyl-L-methionine + H2O = dimethylarsinous acid + 2 [thioredoxin]-disulfide + 3 glutathione + 2 S-adenosyl-L-homocysteine + 2 H(+). It carries out the reaction arsenic triglutathione + 3 [thioredoxin]-dithiol + 3 S-adenosyl-L-methionine = trimethylarsine + 3 [thioredoxin]-disulfide + 3 glutathione + 3 S-adenosyl-L-homocysteine + 3 H(+). In terms of biological role, catalyzes the transfer of a methyl group from AdoMet to arsenite, producing methylated arsenicals. Involved in the conversion of As(III) to dimethylarsenate as the main product in the medium and also produces dimethylarsine and trimethylarsine gases. Reduces the arsenic toxicity in the cell and may contribute to the global arsenic cycling. In Aquipseudomonas alcaligenes (strain ATCC 14909 / DSM 50342 / CCUG 1425 / JCM 20561 / NBRC 14159 / NCIMB 9945 / NCTC 10367 / 1577) (Pseudomonas alcaligenes), this protein is Arsenite methyltransferase.